Consider the following 384-residue polypeptide: Putative glutamate--cysteine ligase 2 (384 aa).

The protein belongs to the glutamate--cysteine ligase type 2 family. YbdK subfamily.

It carries out the reaction L-cysteine + L-glutamate + ATP = gamma-L-glutamyl-L-cysteine + ADP + phosphate + H(+). Functionally, ATP-dependent carboxylate-amine ligase which exhibits weak glutamate--cysteine ligase activity. This is Putative glutamate--cysteine ligase 2 from Ruegeria pomeroyi (strain ATCC 700808 / DSM 15171 / DSS-3) (Silicibacter pomeroyi).